The sequence spans 106 residues: Halilectin 3, beta chain (106 aa).

Asn-65 carries an N-linked (GlcNAc...) asparagine glycan.

As to quaternary structure, probable heterotrimer consisting of an alpha chain and two beta chains. The alpha chain can probably have different glycosylation states. Post-translationally, glycosylated.

Its function is as follows. Lectin with affinity for N-acetyl-galactosamine, carragenan and glycoprotein porcine stomach mucin (PSM). Has metal-independent hemagglutinating activity towards erythrocytes from rabbit and human. Hemagglutinating activity is not inhibited by D-galactose, D-glucose, D-mannose, D-fucose, methyl-alpha-D-galactopyranoside, methyl-alpha-D-glucopyranoside, N-acetyl-glucosamine, N-acetyl-mannosamine, D-fructose, alpha-D-lactose, beta-D-lactose, D-lactulose, D-sucrose, fucoidan or glycoproteins thyroglobulin and ovalmucoid. This is Halilectin 3, beta chain from Haliclona caerulea (Blue Caribbean sponge).